Here is a 287-residue protein sequence, read N- to C-terminus: 4-hydroxybenzoate octaprenyltransferase (287 aa).

6 helical membrane passes run 30–50 (ALWI…FTVG), 89–109 (WEAV…ILPL), 133–153 (FFAI…PMAF), 158–178 (GHVP…SVAY), 199–221 (ALTF…LGIY), and 267–287 (NNWL…AGSF).

It belongs to the UbiA prenyltransferase family. Requires Mg(2+) as cofactor.

It localises to the cell inner membrane. The catalysed reaction is all-trans-octaprenyl diphosphate + 4-hydroxybenzoate = 4-hydroxy-3-(all-trans-octaprenyl)benzoate + diphosphate. Its pathway is cofactor biosynthesis; ubiquinone biosynthesis. Its function is as follows. Catalyzes the prenylation of para-hydroxybenzoate (PHB) with an all-trans polyprenyl group. Mediates the second step in the final reaction sequence of ubiquinone-8 (UQ-8) biosynthesis, which is the condensation of the polyisoprenoid side chain with PHB, generating the first membrane-bound Q intermediate 3-octaprenyl-4-hydroxybenzoate. The polypeptide is 4-hydroxybenzoate octaprenyltransferase (Paraburkholderia phytofirmans (strain DSM 17436 / LMG 22146 / PsJN) (Burkholderia phytofirmans)).